Here is a 591-residue protein sequence, read N- to C-terminus: Probable acetolactate synthase large subunit (591 aa).

Glu-47 is a thiamine diphosphate binding site. FAD-binding positions include Arg-149, 258–279 (HGTK…IGCR), and 301–320 (DIDP…IVGD). The interval 396–476 (QNQMWMAHFF…VVICIFDNRT (81 aa)) is thiamine pyrophosphate binding. The Mg(2+) site is built by Asp-447 and Asn-474.

The protein belongs to the TPP enzyme family. Dimer of large and small chains. Requires Mg(2+) as cofactor. The cofactor is thiamine diphosphate.

It carries out the reaction 2 pyruvate + H(+) = (2S)-2-acetolactate + CO2. Its pathway is amino-acid biosynthesis; L-isoleucine biosynthesis; L-isoleucine from 2-oxobutanoate: step 1/4. The protein operates within amino-acid biosynthesis; L-valine biosynthesis; L-valine from pyruvate: step 1/4. The polypeptide is Probable acetolactate synthase large subunit (ilvB) (Methanocaldococcus jannaschii (strain ATCC 43067 / DSM 2661 / JAL-1 / JCM 10045 / NBRC 100440) (Methanococcus jannaschii)).